A 754-amino-acid polypeptide reads, in one-letter code: uncharacterized protein (754 aa).

Residues 1 to 110 (MNKGQNQVVP…RNMLGSLQKT (110 aa)) form a disordered region. The segment covering 15–25 (FGGQNPPQLSS) has biased composition (polar residues). The segment covering 26-35 (IPPIVNPVVV) has biased composition (low complexity). A compositionally biased stretch (polar residues) spans 36–46 (QNRTSPGTPFI). Positions 49–60 (KAKEIYNRRQQE) are enriched in basic and acidic residues. Acidic residues predominate over residues 62–72 (ISSDSEEEESP). Basic and acidic residues predominate over residues 76 to 93 (AKSKYSRDSRDSRDTRDS).

It localises to the virion. This is an uncharacterized protein from Acanthamoeba polyphaga mimivirus (APMV).